The following is a 289-amino-acid chain: Splicing factor C9orf78 (289 aa).

Residues 1–12 (MPVVRKIFRRRR) show a composition bias toward basic residues. The tract at residues 1–27 (MPVVRKIFRRRRGDSESEEDEQDSEEV) is disordered. Residues 5–58 (RKIFRRRRGDSESEEDEQDSEEVRLKLEETREVQNLRKRPNGVSAVALLVGEKV) form an interaction with SNRNP200 region. Phosphoserine is present on residues Ser15 and Ser17. Tyr147 is modified (phosphotyrosine). Basic and acidic residues predominate over residues 232–283 (LNAPIRRNKEEPKARPLRVGDTEKPEPERSPPNRKRPANEKATDDYHYEKFK). Residues 232–289 (LNAPIRRNKEEPKARPLRVGDTEKPEPERSPPNRKRPANEKATDDYHYEKFKKMNRRY) are disordered. The residue at position 253 (Thr253) is a Phosphothreonine. Ser261 is modified (phosphoserine).

The protein belongs to the TLS1 family. In terms of assembly, component of the spliceosome. Interacts with SNRNP200; the interaction is direct. Interacts with PRPF8.

The protein resides in the nucleus. It is found in the chromosome. Its subcellular location is the centromere. Plays a role in pre-mRNA splicing by promoting usage of the upstream 3'-splice site at alternative NAGNAG splice sites; these are sites featuring alternative acceptor motifs separated by only a few nucleotides. May also modulate exon inclusion events. Plays a role in spliceosomal remodeling by displacing WBP4 from SNRNP200 and may act to inhibit SNRNP200 helicase activity. Binds U5 snRNA. Required for proper chromosome segregation. Not required for splicing of shelterin components. This chain is Splicing factor C9orf78 (C9orf78), found in Homo sapiens (Human).